Reading from the N-terminus, the 285-residue chain is Probable endonuclease 4 (285 aa).

His69, His109, Glu145, Asp179, His182, His216, Asp229, His231, and Glu261 together coordinate Zn(2+).

The protein belongs to the AP endonuclease 2 family. Zn(2+) is required as a cofactor.

The catalysed reaction is Endonucleolytic cleavage to 5'-phosphooligonucleotide end-products.. In terms of biological role, endonuclease IV plays a role in DNA repair. It cleaves phosphodiester bonds at apurinic or apyrimidinic (AP) sites, generating a 3'-hydroxyl group and a 5'-terminal sugar phosphate. This chain is Probable endonuclease 4, found in Yersinia pseudotuberculosis serotype O:1b (strain IP 31758).